A 41-amino-acid polypeptide reads, in one-letter code: Plantazolicin (41 aa).

Residues 1–27 constitute a propeptide that is removed on maturation; it reads MTKITIPTALSAKVHGEGQHLFEPMAA. Arg28 is modified (N2,N2-dimethylarginine; in form plantazolicin A). Residues 28–29 constitute a cross-link (thiazole-4-carboxylic acid (Arg-Cys)); it reads RC. 2 cross-links (5-methyloxazole-4-carboxylic acid (Cys-Thr)) span residues 29 to 30 and 31 to 32; these read CT. Positions 30–31 form a cross-link, thiazole-4-carboxylic acid (Thr-Cys); it reads TC. The 5-methyloxazole-4-carboxylic acid (Thr-Thr) cross-link spans 32–33; the sequence is TT. A cross-link (oxazole-4-carboxylic acid (Ile-Ser)) is located at residues 35-36; it reads IS. Cross-links (oxazole-4-carboxylic acid (Ser-Ser)) lie at residues 36 to 37, 37 to 38, and 38 to 39; these read SS. A cross-link (5-methyloxazoline-4-carboxylic acid (Ser-Thr)) is located at residues 39-40; it reads ST.

Maturation of thiazole and oxazole containing antibiotics involves the enzymatic condensation of a Cys, Ser or Thr with the alpha-carbonyl of the preceding amino acid to form a thioether or ether bond, then dehydration to form a double bond with the alpha-amino nitrogen. Thiazoline or oxazoline ring are dehydrogenated to form thiazole or oxazole rings.

It is found in the secreted. It localises to the cell wall. Its function is as follows. Peptide antibiotic inhibiting growth of Gram-positive bacteria. The mode of action appears to be disruption of cell walls and lysis of cells. The chain is Plantazolicin from Bacillus pumilus (strain ATCC 7061 / DSM 27 / CCUG 26015 / JCM 2508 / NBRC 12092 / NCIMB 9369 / NCTC 10337 / NRRL NRS-272 / CCM 2144).